The primary structure comprises 350 residues: MDSFNYTTPDYGHYDDKDTLDPNTPVDKTSNTLRVPDILALVIFAVVFLVGVLGNALVVWVTAFEVKRTINAIWFLNLAVADFLSCLALPILFTSIVQHHHWPFGGAACRILPSLILLNMYASILLLATISADRFLLVFKPIWCQNFRGAGLAWIACAVAWGLALLLTIPSFLYRVVREEYFPPKVLCGVDYSHDKQRERAVAVVRLVLGFLWPLLTLTICYTFILLRTWSRRATRSTKTLKVVVAVVASFFIFWLPYQVTGIMMSFLEPSSPTFLLLKKLDSLCVSFAYINCCINPIIYVVAGQGFQGRLRKSLPSLLRNVLTEESVVRESKSFTRSTVDTMAEKTQAV.

At 1-37 (MDSFNYTTPDYGHYDDKDTLDPNTPVDKTSNTLRVPD) the chain is on the extracellular side. The interval 10–18 (DYGHYDDKD) is required for CHIPS binding. Sulfotyrosine occurs at positions 11 and 14. Positions 21–30 (DPNTPVDKTS) are involved in C5a binding. A helical transmembrane segment spans residues 38-64 (ILALVIFAVVFLVGVLGNALVVWVTAF). Residues 65 to 69 (EVKRT) are Cytoplasmic-facing. Residues 70-93 (INAIWFLNLAVADFLSCLALPILF) form a helical membrane-spanning segment. Residues 94-110 (TSIVQHHHWPFGGAACR) are Extracellular-facing. The cysteines at positions 109 and 188 are disulfide-linked. Residues 111 to 132 (ILPSLILLNMYASILLLATISA) form a helical membrane-spanning segment. Residues 133–153 (DRFLLVFKPIWCQNFRGAGLA) are Cytoplasmic-facing. The chain crosses the membrane as a helical span at residues 154–174 (WIACAVAWGLALLLTIPSFLY). The Extracellular segment spans residues 175–200 (RVVREEYFPPKVLCGVDYSHDKQRER). Residues 201–226 (AVAVVRLVLGFLWPLLTLTICYTFIL) form a helical membrane-spanning segment. At 227 to 242 (LRTWSRRATRSTKTLK) the chain is on the cytoplasmic side. The chain crosses the membrane as a helical span at residues 243–265 (VVVAVVASFFIFWLPYQVTGIMM). Residues 266-282 (SFLEPSSPTFLLLKKLD) lie on the Extracellular side of the membrane. The chain crosses the membrane as a helical span at residues 283–303 (SLCVSFAYINCCINPIIYVVA). Residues 304–350 (GQGFQGRLRKSLPSLLRNVLTEESVVRESKSFTRSTVDTMAEKTQAV) are Cytoplasmic-facing. A phosphoserine mark is found at S314, S317, S327, S332, S334, and S338.

Belongs to the G-protein coupled receptor 1 family. In terms of assembly, homodimer. May also form higher-order oligomers. Interacts (when phosphorylated) with ARRB1 and ARRB2; the interaction is associated with internalization of C5aR. Interacts (via N-terminal domain) with S.aureus chemotaxis inhibitory protein (CHIPS); the interaction blocks the receptor and may thus inhibit the immune response. Post-translationally, sulfation plays a critical role in the association of C5aR with C5a, but no significant role in the ability of the receptor to transduce a signal and mobilize calcium in response to a small peptide agonist. Sulfation at Tyr-14 is important for CHIPS binding. Phosphorylated on serine residues in response to C5a binding, resulting in internalization of the receptor and short-term desensitization to C5a.

The protein resides in the cell membrane. Its subcellular location is the cytoplasmic vesicle. Receptor for the chemotactic and inflammatory peptide anaphylatoxin C5a. The ligand interacts with at least two sites on the receptor: a high-affinity site on the extracellular N-terminus, and a second site in the transmembrane region which activates downstream signaling events. Receptor activation stimulates chemotaxis, granule enzyme release, intracellular calcium release and superoxide anion production. This Gorilla gorilla gorilla (Western lowland gorilla) protein is C5a anaphylatoxin chemotactic receptor 1 (C5AR1).